We begin with the raw amino-acid sequence, 416 residues long: Ferrochelatase, mitochondrial (416 aa).

A mitochondrion-targeting transit peptide spans Met1–Arg47. Positions Glu41–Thr62 are disordered. Lys50 carries the N6-acetyllysine modification. 3 residues coordinate protoporphyrin IX: Arg108, Tyr116, and Ser123. Lys131 carries the post-translational modification N6-succinyllysine. Cys189 serves as a coordination point for [2Fe-2S] cluster. The active site involves His223. Lys283 is modified (N6-acetyllysine; alternate). An N6-succinyllysine; alternate modification is found at Lys283. The active site involves Asp376. Cys396, Cys399, and Cys404 together coordinate [2Fe-2S] cluster. At Lys408 the chain carries N6-acetyllysine; alternate. Residue Lys408 is modified to N6-succinyllysine; alternate.

Belongs to the ferrochelatase family. As to quaternary structure, homodimer. Homotetramer. Interaction with PGRMC1; the interaction results in decreased FECH activity. Interacts with ABCB10 and SLC25A37; this interaction forms an oligomeric complex. Forms a complex with ABCB7 and ABCB10, where a dimeric FECH bridges ABCB7 and ABCB10 homodimers; this complex may be required for cellular iron homeostasis, mitochondrial function and heme biosynthesis. Interacts with ABCB7 and ABCB10. The cofactor is [2Fe-2S] cluster.

It localises to the mitochondrion inner membrane. The catalysed reaction is heme b + 2 H(+) = protoporphyrin IX + Fe(2+). It participates in porphyrin-containing compound metabolism; protoheme biosynthesis; protoheme from protoporphyrin-IX: step 1/1. Functionally, catalyzes the ferrous insertion into protoporphyrin IX and participates in the terminal step in the heme biosynthetic pathway. This Bos taurus (Bovine) protein is Ferrochelatase, mitochondrial.